Consider the following 513-residue polypeptide: 2-isopropylmalate synthase (513 aa).

In terms of domain architecture, Pyruvate carboxyltransferase spans 5–268 (LIIFDTTLRD…DLRVDTSQIV (264 aa)). Residues Asp14, His202, His204, and Asn239 each coordinate Mn(2+). The regulatory domain stretch occupies residues 394–513 (RLLALSQHSE…SKAERVAAQG (120 aa)).

Belongs to the alpha-IPM synthase/homocitrate synthase family. LeuA type 1 subfamily. Homodimer. The cofactor is Mn(2+).

The protein resides in the cytoplasm. The catalysed reaction is 3-methyl-2-oxobutanoate + acetyl-CoA + H2O = (2S)-2-isopropylmalate + CoA + H(+). It functions in the pathway amino-acid biosynthesis; L-leucine biosynthesis; L-leucine from 3-methyl-2-oxobutanoate: step 1/4. In terms of biological role, catalyzes the condensation of the acetyl group of acetyl-CoA with 3-methyl-2-oxobutanoate (2-ketoisovalerate) to form 3-carboxy-3-hydroxy-4-methylpentanoate (2-isopropylmalate). The polypeptide is 2-isopropylmalate synthase (Leptothrix cholodnii (strain ATCC 51168 / LMG 8142 / SP-6) (Leptothrix discophora (strain SP-6))).